A 240-amino-acid chain; its full sequence is tRNA (guanine-N(7)-)-methyltransferase (240 aa).

4 residues coordinate S-adenosyl-L-methionine: Glu70, Glu95, Asp122, and Asp145. Asp145 is a catalytic residue. Residues Lys149, Asp181, and 218–221 (TKFE) each bind substrate.

The protein belongs to the class I-like SAM-binding methyltransferase superfamily. TrmB family.

It carries out the reaction guanosine(46) in tRNA + S-adenosyl-L-methionine = N(7)-methylguanosine(46) in tRNA + S-adenosyl-L-homocysteine. The protein operates within tRNA modification; N(7)-methylguanine-tRNA biosynthesis. In terms of biological role, catalyzes the formation of N(7)-methylguanine at position 46 (m7G46) in tRNA. This chain is tRNA (guanine-N(7)-)-methyltransferase, found in Pseudomonas entomophila (strain L48).